The sequence spans 95 residues: Aspartyl/glutamyl-tRNA(Asn/Gln) amidotransferase subunit C (95 aa).

It belongs to the GatC family. In terms of assembly, heterotrimer of A, B and C subunits.

It carries out the reaction L-glutamyl-tRNA(Gln) + L-glutamine + ATP + H2O = L-glutaminyl-tRNA(Gln) + L-glutamate + ADP + phosphate + H(+). It catalyses the reaction L-aspartyl-tRNA(Asn) + L-glutamine + ATP + H2O = L-asparaginyl-tRNA(Asn) + L-glutamate + ADP + phosphate + 2 H(+). Its function is as follows. Allows the formation of correctly charged Asn-tRNA(Asn) or Gln-tRNA(Gln) through the transamidation of misacylated Asp-tRNA(Asn) or Glu-tRNA(Gln) in organisms which lack either or both of asparaginyl-tRNA or glutaminyl-tRNA synthetases. The reaction takes place in the presence of glutamine and ATP through an activated phospho-Asp-tRNA(Asn) or phospho-Glu-tRNA(Gln). This chain is Aspartyl/glutamyl-tRNA(Asn/Gln) amidotransferase subunit C, found in Methylobacterium sp. (strain 4-46).